The sequence spans 450 residues: Phosphoglucosamine mutase (450 aa).

S102 functions as the Phosphoserine intermediate in the catalytic mechanism. Mg(2+) contacts are provided by S102, D244, D246, and D248. S102 bears the Phosphoserine mark.

Belongs to the phosphohexose mutase family. Requires Mg(2+) as cofactor. Activated by phosphorylation.

The catalysed reaction is alpha-D-glucosamine 1-phosphate = D-glucosamine 6-phosphate. Its function is as follows. Catalyzes the conversion of glucosamine-6-phosphate to glucosamine-1-phosphate. The polypeptide is Phosphoglucosamine mutase (Nitratidesulfovibrio vulgaris (strain DSM 19637 / Miyazaki F) (Desulfovibrio vulgaris)).